The following is a 601-amino-acid chain: Sodium-dependent phosphate transport protein 2C (601 aa).

Residues Met-1–Ala-75 lie on the Cytoplasmic side of the membrane. Position 4 is a phosphoserine (Ser-4). Residues Cys-76 to Phe-96 form a helical membrane-spanning segment. The Extracellular portion of the chain corresponds to Gln-97 to Asp-110. The chain crosses the membrane as a helical span at residues Asn-111 to Val-131. Topologically, residues Gln-132–Ala-187 are cytoplasmic. Residues Phe-188 to Leu-208 form a helical membrane-spanning segment. Residues Glu-209–Ala-324 lie on the Extracellular side of the membrane. Asn-210, Asn-264, Asn-267, and Asn-299 each carry an N-linked (GlcNAc...) asparagine glycan. A disulfide bridge connects residues Cys-275 and Cys-311. A helical transmembrane segment spans residues Val-325–Val-345. At Lys-346–Pro-369 the chain is on the cytoplasmic side. The helical transmembrane segment at Phe-370 to Leu-390 threads the bilayer. Topologically, residues Leu-391–Gln-447 are extracellular. A helical transmembrane segment spans residues Val-448 to Val-468. Residues Leu-469–Arg-487 are Cytoplasmic-facing. Residues Trp-488–Leu-508 form a helical membrane-spanning segment. The Extracellular portion of the chain corresponds to Ser-509–Gly-512. A helical transmembrane segment spans residues Gly-513 to Val-533. Residues Asn-534–Leu-601 are Cytoplasmic-facing.

This sequence belongs to the SLC34A transporter family. In terms of tissue distribution, highly expressed in the kidney. Not found in any of the other tested tissues.

It is found in the apical cell membrane. The enzyme catalyses 2 Na(+)(out) + phosphate(out) = 2 Na(+)(in) + phosphate(in). Its function is as follows. Involved in actively transporting phosphate into cells via Na(+) cotransport in the renal brush border membrane. The cotransport has a Na(+):Pi stoichiometry of 2:1 and is electroneutral. This Rattus norvegicus (Rat) protein is Sodium-dependent phosphate transport protein 2C (Slc34a3).